We begin with the raw amino-acid sequence, 508 residues long: MGLPWYRVHTVVLNDPGRLLSVHIMHTALVAGWAGSMALYELAVFDPSDPVLDPMWRQGMFVIPFMTRLGITNSWGGWSITGGTITNPGIWSYEGVAGAHIVFSGLCFLAAIWHWVYWDLEIFCDERTGKPSLDLPKIFGIHLFLSGVACFGFGAFHVTGLYGPGIWVSDPCGLTGKVQPVNPAWGVEGFDPFVPGGIASHHIAAGTLGILAGLFHLSVRPPQRLYKGLRMGNIETVLSSSIAAVFFAAFVVAGTMWYGSATTPIELFGPTRYQWDQGYFQQEIYRRVSAGLAENQSLSEAWSKIPEKLAFYDYIGNNPAKGGLFRAGSMDNGDGIAVGWLGHPIFRDKDGRELFVRRMPTFFETFPVVLVDGDGIVRADVPFRRAESKYSVEQVGVTVEFYGGELNGVSYSDPATVKKYARRAQLGEIFELDRATLKSDGVFRSSPRGWFTFGHASFALLFFFGHIWHGARTLFRDVFAGIDPDLDAQVEFGAFQKLGDPTTRRQVV.

6 helical membrane-spanning segments follow: residues 21–36, 101–115, 140–156, 203–218, 237–252, and 457–472; these read SVHI…WAGS, IVFS…IWHW, GIHL…FGAF, IAAG…FHLS, VLSS…AFVV, and SFAL…HGAR.

It belongs to the PsbB/PsbC family. PsbB subfamily. In terms of assembly, PSII is composed of 1 copy each of membrane proteins PsbA, PsbB, PsbC, PsbD, PsbE, PsbF, PsbH, PsbI, PsbJ, PsbK, PsbL, PsbM, PsbT, PsbX, PsbY, PsbZ, Psb30/Ycf12, at least 3 peripheral proteins of the oxygen-evolving complex and a large number of cofactors. It forms dimeric complexes. It depends on Binds multiple chlorophylls. PSII binds additional chlorophylls, carotenoids and specific lipids. as a cofactor.

The protein localises to the plastid. Its subcellular location is the chloroplast thylakoid membrane. Functionally, one of the components of the core complex of photosystem II (PSII). It binds chlorophyll and helps catalyze the primary light-induced photochemical processes of PSII. PSII is a light-driven water:plastoquinone oxidoreductase, using light energy to abstract electrons from H(2)O, generating O(2) and a proton gradient subsequently used for ATP formation. The sequence is that of Photosystem II CP47 reaction center protein from Gossypium barbadense (Sea Island cotton).